A 275-amino-acid polypeptide reads, in one-letter code: NADH-quinone oxidoreductase subunit E 1 (275 aa).

Residues cysteine 99, cysteine 104, cysteine 140, and cysteine 144 each contribute to the [2Fe-2S] cluster site. The interval 200–275 is disordered; it reads LQAPEPVEEK…DKSKPAKKPR (76 aa). Over residues 206–221 the composition is skewed to basic and acidic residues; it reads VEEKKSVRASKAKDEQ. The segment covering 231–242 has biased composition (polar residues); it reads AKPSTATDVTNP. The segment covering 243–256 has biased composition (low complexity); it reads TLKTPATARKAAAK. The segment covering 258-269 has biased composition (basic and acidic residues); it reads VKIEGETVDKSK.

It belongs to the complex I 24 kDa subunit family. [2Fe-2S] cluster serves as cofactor.

The enzyme catalyses a quinone + NADH + 5 H(+)(in) = a quinol + NAD(+) + 4 H(+)(out). Its function is as follows. NDH-1 shuttles electrons from NADH, via FMN and iron-sulfur (Fe-S) centers, to quinones in the respiratory chain. The immediate electron acceptor for the enzyme in this species is believed to be ubiquinone. Couples the redox reaction to proton translocation (for every two electrons transferred, four hydrogen ions are translocated across the cytoplasmic membrane), and thus conserves the redox energy in a proton gradient. In Rhizobium meliloti (strain 1021) (Ensifer meliloti), this protein is NADH-quinone oxidoreductase subunit E 1 (nuoE1).